Reading from the N-terminus, the 396-residue chain is CCA-adding enzyme (396 aa).

ATP-binding residues include glycine 32 and arginine 35. 2 residues coordinate CTP: glycine 32 and arginine 35. The Mg(2+) site is built by aspartate 45 and aspartate 47. ATP is bound by residues arginine 116, aspartate 159, arginine 162, arginine 165, and arginine 168. CTP-binding residues include arginine 116, aspartate 159, arginine 162, arginine 165, and arginine 168.

It belongs to the tRNA nucleotidyltransferase/poly(A) polymerase family. Bacterial CCA-adding enzyme type 3 subfamily. As to quaternary structure, homodimer. Mg(2+) serves as cofactor.

The enzyme catalyses a tRNA precursor + 2 CTP + ATP = a tRNA with a 3' CCA end + 3 diphosphate. It catalyses the reaction a tRNA with a 3' CCA end + 2 CTP + ATP = a tRNA with a 3' CCACCA end + 3 diphosphate. In terms of biological role, catalyzes the addition and repair of the essential 3'-terminal CCA sequence in tRNAs without using a nucleic acid template. Adds these three nucleotides in the order of C, C, and A to the tRNA nucleotide-73, using CTP and ATP as substrates and producing inorganic pyrophosphate. tRNA 3'-terminal CCA addition is required both for tRNA processing and repair. Also involved in tRNA surveillance by mediating tandem CCA addition to generate a CCACCA at the 3' terminus of unstable tRNAs. While stable tRNAs receive only 3'-terminal CCA, unstable tRNAs are marked with CCACCA and rapidly degraded. The chain is CCA-adding enzyme from Lactobacillus delbrueckii subsp. bulgaricus (strain ATCC 11842 / DSM 20081 / BCRC 10696 / JCM 1002 / NBRC 13953 / NCIMB 11778 / NCTC 12712 / WDCM 00102 / Lb 14).